Here is a 738-residue protein sequence, read N- to C-terminus: Polyribonucleotide nucleotidyltransferase (738 aa).

Mg(2+) is bound by residues Asp-528 and Asp-534. Positions 594-653 (PRVVRVKIPVQKIGELIGPKGKVINSIQDETGAEISIEDDGTVYIGSSQADSSEKAVAMV) constitute a KH domain. The region spanning 665–737 (GSQFLGTVVK…DRGKLCLVAV (73 aa)) is the S1 motif domain.

This sequence belongs to the polyribonucleotide nucleotidyltransferase family. The cofactor is Mg(2+).

The protein localises to the cytoplasm. It catalyses the reaction RNA(n+1) + phosphate = RNA(n) + a ribonucleoside 5'-diphosphate. Its function is as follows. Involved in mRNA degradation. Catalyzes the phosphorolysis of single-stranded polyribonucleotides processively in the 3'- to 5'-direction. This Tropheryma whipplei (strain Twist) (Whipple's bacillus) protein is Polyribonucleotide nucleotidyltransferase.